Consider the following 221-residue polypeptide: MERNPPDGTGPVHVPLGHIVASEKWRGSQLAQEMQGKVRLIFEEGLASADFYLSSKSCILYVTEADLVAGHGYRKRLARFRNSSHLQGIIIVEKTQMSEQYFPAVQKFTVLDLGMVLLPVASQSEASCLIIHLVQEQTREPSKNPFLRKKRSMLSELSLVQTVQQIPGVGKVKAPLLLQKFPSIQQLSNASVQELEEVVGPAAAQQIHTFFTQPKRQQPRS.

In terms of assembly, belongs to the multisubunit FA complex composed of FANCA, FANCB, FANCC, FANCE, FANCF, FANCG, FANCL/PHF9, FANCM and FAAP24. Interacts with FANCM.

The protein localises to the nucleus. Plays a role in DNA repair through recruitment of the FA core complex to damaged DNA. Regulates FANCD2 monoubiquitination upon DNA damage. Induces chromosomal instability as well as hypersensitivity to DNA cross-linking agents, when repressed. Targets FANCM/FAAP24 complex to the DNA, preferentially to single strand DNA. This Mus musculus (Mouse) protein is Fanconi anemia core complex-associated protein 24.